Reading from the N-terminus, the 103-residue chain is Glutaredoxin-C11 (103 aa).

Positions M1–W102 constitute a Glutaredoxin domain. C21 and C24 form a disulfide bridge.

This sequence belongs to the glutaredoxin family. CC-type subfamily.

Its subcellular location is the cytoplasm. In terms of biological role, has a glutathione-disulfide oxidoreductase activity in the presence of NADPH and glutathione reductase. Reduces low molecular weight disulfides and proteins. The chain is Glutaredoxin-C11 (GRXC11) from Arabidopsis thaliana (Mouse-ear cress).